The sequence spans 259 residues: Ribosomal RNA small subunit methyltransferase J (259 aa).

Residues 101–102 (RD), 117–118 (ER), 153–154 (SS), and Asp176 contribute to the S-adenosyl-L-methionine site.

This sequence belongs to the methyltransferase superfamily. RsmJ family.

It localises to the cytoplasm. The catalysed reaction is guanosine(1516) in 16S rRNA + S-adenosyl-L-methionine = N(2)-methylguanosine(1516) in 16S rRNA + S-adenosyl-L-homocysteine + H(+). Its function is as follows. Specifically methylates the guanosine in position 1516 of 16S rRNA. The protein is Ribosomal RNA small subunit methyltransferase J of Aliivibrio fischeri (strain MJ11) (Vibrio fischeri).